We begin with the raw amino-acid sequence, 399 residues long: Probable tRNA sulfurtransferase (399 aa).

One can recognise a THUMP domain in the interval 60-165 (YAVMERLKRV…TEGTYISCET (106 aa)). ATP-binding positions include 183–184 (LL), 208–209 (HF), Arg265, Gly287, and Gln296.

Belongs to the ThiI family.

The protein resides in the cytoplasm. The catalysed reaction is [ThiI sulfur-carrier protein]-S-sulfanyl-L-cysteine + a uridine in tRNA + 2 reduced [2Fe-2S]-[ferredoxin] + ATP + H(+) = [ThiI sulfur-carrier protein]-L-cysteine + a 4-thiouridine in tRNA + 2 oxidized [2Fe-2S]-[ferredoxin] + AMP + diphosphate. It catalyses the reaction [ThiS sulfur-carrier protein]-C-terminal Gly-Gly-AMP + S-sulfanyl-L-cysteinyl-[cysteine desulfurase] + AH2 = [ThiS sulfur-carrier protein]-C-terminal-Gly-aminoethanethioate + L-cysteinyl-[cysteine desulfurase] + A + AMP + 2 H(+). Its pathway is cofactor biosynthesis; thiamine diphosphate biosynthesis. In terms of biological role, catalyzes the ATP-dependent transfer of a sulfur to tRNA to produce 4-thiouridine in position 8 of tRNAs, which functions as a near-UV photosensor. Also catalyzes the transfer of sulfur to the sulfur carrier protein ThiS, forming ThiS-thiocarboxylate. This is a step in the synthesis of thiazole, in the thiamine biosynthesis pathway. The sulfur is donated as persulfide by IscS. This Brevibacillus brevis (strain 47 / JCM 6285 / NBRC 100599) protein is Probable tRNA sulfurtransferase.